Reading from the N-terminus, the 321-residue chain is Small ribosomal subunit biogenesis GTPase RsgA (321 aa).

The region spanning 89–248 (QSWINRPPVA…VADTPGFNRP (160 aa)) is the CP-type G domain. GTP is bound by residues 138–141 (TKRD) and 190–198 (GPSGVGKTS). Zn(2+) contacts are provided by Cys273, Cys278, His280, and Cys286.

Belongs to the TRAFAC class YlqF/YawG GTPase family. RsgA subfamily. In terms of assembly, monomer. Associates with 30S ribosomal subunit, binds 16S rRNA. Requires Zn(2+) as cofactor.

It is found in the cytoplasm. In terms of biological role, one of several proteins that assist in the late maturation steps of the functional core of the 30S ribosomal subunit. Helps release RbfA from mature subunits. May play a role in the assembly of ribosomal proteins into the subunit. Circularly permuted GTPase that catalyzes slow GTP hydrolysis, GTPase activity is stimulated by the 30S ribosomal subunit. In Prochlorococcus marinus (strain MIT 9303), this protein is Small ribosomal subunit biogenesis GTPase RsgA.